The chain runs to 72 residues: Translation initiation factor IF-1 (72 aa).

An S1-like domain is found at 1–72; the sequence is MSKEDSIEVT…TKGRITFRHR (72 aa).

Belongs to the IF-1 family. As to quaternary structure, component of the 30S ribosomal translation pre-initiation complex which assembles on the 30S ribosome in the order IF-2 and IF-3, IF-1 and N-formylmethionyl-tRNA(fMet); mRNA recruitment can occur at any time during PIC assembly.

It localises to the cytoplasm. One of the essential components for the initiation of protein synthesis. Stabilizes the binding of IF-2 and IF-3 on the 30S subunit to which N-formylmethionyl-tRNA(fMet) subsequently binds. Helps modulate mRNA selection, yielding the 30S pre-initiation complex (PIC). Upon addition of the 50S ribosomal subunit IF-1, IF-2 and IF-3 are released leaving the mature 70S translation initiation complex. In Solibacter usitatus (strain Ellin6076), this protein is Translation initiation factor IF-1.